We begin with the raw amino-acid sequence, 169 residues long: Putative phosphoesterase SH1944 (169 aa).

H34 functions as the Proton donor in the catalytic mechanism. 2 short sequence motifs (HXTX) span residues 34-37 and 115-118; these read HITI and HFTI. H115 functions as the Proton acceptor in the catalytic mechanism.

It belongs to the 2H phosphoesterase superfamily. YjcG family.

The protein is Putative phosphoesterase SH1944 of Staphylococcus haemolyticus (strain JCSC1435).